Here is a 426-residue protein sequence, read N- to C-terminus: Serine--tRNA ligase (426 aa).

The segment covering Met1–Arg15 has biased composition (basic and acidic residues). The segment at Met1 to Ala20 is disordered. L-serine is bound at residue Thr228–Glu230. Residues Arg259–Glu261 and Val275 each bind ATP. Residue Glu282 participates in L-serine binding. Residue Glu346–Ser349 coordinates ATP. Thr386 is a binding site for L-serine.

This sequence belongs to the class-II aminoacyl-tRNA synthetase family. Type-1 seryl-tRNA synthetase subfamily. In terms of assembly, homodimer. The tRNA molecule binds across the dimer.

It localises to the cytoplasm. It catalyses the reaction tRNA(Ser) + L-serine + ATP = L-seryl-tRNA(Ser) + AMP + diphosphate + H(+). It carries out the reaction tRNA(Sec) + L-serine + ATP = L-seryl-tRNA(Sec) + AMP + diphosphate + H(+). It functions in the pathway aminoacyl-tRNA biosynthesis; selenocysteinyl-tRNA(Sec) biosynthesis; L-seryl-tRNA(Sec) from L-serine and tRNA(Sec): step 1/1. Catalyzes the attachment of serine to tRNA(Ser). Is also able to aminoacylate tRNA(Sec) with serine, to form the misacylated tRNA L-seryl-tRNA(Sec), which will be further converted into selenocysteinyl-tRNA(Sec). The chain is Serine--tRNA ligase from Paenarthrobacter aurescens (strain TC1).